The chain runs to 234 residues: Transcriptional regulatory protein WalR (234 aa).

Residues 3-116 form the Response regulatory domain; the sequence is KILIVDDEKP…ELQARVKALL (114 aa). Asp52 carries the post-translational modification 4-aspartylphosphate. Residues 133-232 constitute a DNA-binding region (ompR/PhoB-type); that stretch reads PQPIQIGDLE…RRGVGYYMRN (100 aa).

As to quaternary structure, monomer. Homodimer. Phosphorylated by WalK; can also be dephosphorylated by WalK.

It is found in the cytoplasm. Its function is as follows. Member of the two-component regulatory system WalK/WalR that regulates genes involved in cell wall metabolism. Binds to the promoter region of the transcription factor fabT gene in the fabTH-acp operon in vitro. Inhibits transcription of fabT, probably acting in an unphosphorylated form, thereby playing a role in the regulation of fatty acid biosynthesis. Essential for normal growth in vitro. Required for maintaining normal cellular morphology, acting, at least in part, by regulating peptidoglycan hydrolase pcsB. Involved in maintaining expression of WalRK regulon genes in exponentially growing cells. The sequence is that of Transcriptional regulatory protein WalR from Streptococcus pneumoniae serotype 2 (strain D39 / NCTC 7466).